A 713-amino-acid chain; its full sequence is MLFRSVVNKPRLGCRQRGVPFTHPLQSLLQCYQCAKHDEHTSYGELGAAVPPFGCAFSTVPDMSHVLAVANEEGIVRLYDTECRDVQRLVVKEFMAHTNAVFDIAWVPGEHKLVTASGDQTAKLWDVKAGDLIGECKGHQCSLKSVAFSKFEKAVFSTGGRDGNIMVWDTRCNKKDGFYRQVNQITGAHNALDKQTPSKVKKRKPYVRGLAPSVDSQQSVTVVIFQDEHTIISAGAVDGIVKVWDLRKNYSAYRQDPVPAKLFPYPGNSTRKLGYSNLVLDPTGTNLFASCTDDNVYMFNATGLKTEPVSVFGGHQNSTFYIKTSVSPDGQFLLSGSSDHSAYIWQVSDPKVPPVTLTGHCQEVTSVAWCQSDFTKIATCSDDNTVRVWRLKRSSEDSAQSDKTETVGWACQKKCVPPSMAANLCTPGKPSMIPSSSLMSSPTPATCAPSYTGDLPMPSSTPVSALLPIPKLQTPQRLNGEGLGASPKQTSSSKISIKDWITRTPKSSTRADTKTPSPRKAFTPVEQYPSVSSTRVQMPYEKRAKRRLETSSEDVEHVCLDHCNCVMELEPGLKKAKLDLCSFSEKERDGSDDKCLRLSDLSRGFDQEFSPGPSTSFLINGTVNPPLSPLSELKSDLRDKENSSPEKNWLSALGHKFKSDKSSPQNKAASSPSSRNSTSKKHPTRNAPNSPVSVPTTPGSMRKICTYFFKKSE.

WD repeat units follow at residues 47 to 89 (GAAV…VQRL), 96 to 135 (AHTN…LIGE), and 138 to 178 (GHQC…KDGF). The short motif at 168–171 (WDTR) is the DDB1-binding motif element. The short motif at 197–204 (PSKVKKRK) is the Nuclear localization signal element. WD repeat units lie at residues 215–254 (DSQQ…SAYR), 270–309 (TRKL…TEPV), 314–355 (GHQN…VPPV), and 359–399 (GHCQ…EDSA). The DDB1-binding motif signature appears at 244–247 (WDLR). 3 disordered regions span residues 474-544 (TPQR…EKRA), 604-623 (GFDQ…NGTV), and 635-700 (SDLR…TPGS). Polar residues-rich tracts occupy residues 504 to 516 (TPKS…TKTP) and 612 to 623 (GPSTSFLINGTV). Residues 635–644 (SDLRDKENSS) show a composition bias toward basic and acidic residues. Residues 686–699 (NAPNSPVSVPTTPG) show a composition bias toward polar residues.

Belongs to the WD repeat cdt2 family. Component of the DCX(DTL) E3 ubiquitin ligase complex, at least composed of cul4 (cul4a or cul4b), ddb1, dtl/cdt2 and rbx1.

It is found in the nucleus. Its subcellular location is the cytoplasm. It localises to the cytoskeleton. The protein resides in the microtubule organizing center. The protein localises to the centrosome. It is found in the chromosome. It functions in the pathway protein modification; protein ubiquitination. In terms of biological role, substrate-specific adapter of a DCX (DDB1-CUL4-X-box) E3 ubiquitin-protein ligase complex required for cell cycle control, DNA damage response and translesion DNA synthesis. The DCX(DTL) complex, also named CRL4(CDT2) complex, mediates the polyubiquitination and subsequent degradation of CDT1, CDKN1A/p21(CIP1), KMT5A and SDE2. CDT1 degradation in response to DNA damage is necessary to ensure proper cell cycle regulation of DNA replication. CDKN1A/p21(CIP1) degradation during S phase or following UV irradiation is essential to control replication licensing. KMT5A degradation is also important for a proper regulation of mechanisms such as TGF-beta signaling, cell cycle progression, DNA repair and cell migration. Most substrates require their interaction with PCNA for their polyubiquitination: substrates interact with PCNA via their PIP-box, and those containing the 'K+4' motif in the PIP box, recruit the DCX(DTL) complex, leading to their degradation. In undamaged proliferating cells, the DCX(DTL) complex also promotes the 'Lys-164' monoubiquitination of PCNA, thereby being involved in PCNA-dependent translesion DNA synthesis. May play a role in the regulation of the circadian clock. This chain is Denticleless protein homolog (dtl), found in Xenopus tropicalis (Western clawed frog).